A 452-amino-acid chain; its full sequence is MEKQYLTVTALTRYIKTKIEYDPHLQSVWLKGEISNFKNHSRGHMYFTLKDENARIAAVMFAGHNRNIKFKPENGMKVLVKGKISVYEASGSYQIYIQDMQPDGVGNLHLAYEQLKVRLEEEGLFSQVYKKAIPPYAKTIGVITSPTGAAIRDIITTIKRRYPIGNVIVFPVLVQGESAAPSIVQAIRTANEMGEIDVLIVGRGGGSIEELWAFNEEMVARAIFKSEIPIISAVGHETDFTIADFVADLRAPTPTAAAELAAPNIIELQEKVLQRTLRLQRAMRELVHKKEEKLQVLQKSYAFRYPRQVYEQKEEQLDRALEQLVLAKERYIDKKVNQLKQLSFYLEKHHPSQKIMQTKVAVETLQKQLQREMQTLLQTKEFAFVRAAQKLEALSPLKVMMRGYGLVYDEEKQVLKSVKDVSLGDAVSVQLQDGILDCSVSGIEERELNNGK.

The protein belongs to the XseA family. Heterooligomer composed of large and small subunits.

It is found in the cytoplasm. It catalyses the reaction Exonucleolytic cleavage in either 5'- to 3'- or 3'- to 5'-direction to yield nucleoside 5'-phosphates.. In terms of biological role, bidirectionally degrades single-stranded DNA into large acid-insoluble oligonucleotides, which are then degraded further into small acid-soluble oligonucleotides. This chain is Exodeoxyribonuclease 7 large subunit, found in Bacillus cereus (strain G9842).